A 313-amino-acid chain; its full sequence is Tyrosine recombinase XerD (313 aa).

The Core-binding (CB) domain occupies 17–102 (EDNDVIIEQF…TLRRFFQYLY (86 aa)). A Tyr recombinase domain is found at 123-307 (RLPKDLSEQQ…ATERLKVLHQ (185 aa)). Catalysis depends on residues Arg163, Lys187, His259, Arg262, and His285. The O-(3'-phospho-DNA)-tyrosine intermediate role is filled by Tyr294.

Belongs to the 'phage' integrase family. XerD subfamily. Forms a cyclic heterotetrameric complex composed of two molecules of XerC and two molecules of XerD, in which XerC interacts with XerD via its C-terminal region, XerD interacts with XerC via its C-terminal region and so on.

Its subcellular location is the cytoplasm. Its activity is regulated as follows. FtsK may regulate the catalytic switch between XerC and XerD in the heterotetrameric complex during the two steps of the recombination process. Site-specific tyrosine recombinase, which acts by catalyzing the cutting and rejoining of the recombining DNA molecules. Binds cooperatively to specific DNA consensus sequences that are separated from XerC binding sites by a short central region, forming the heterotetrameric XerC-XerD complex that recombines DNA substrates. The complex is essential to convert dimers of the bacterial chromosome into monomers to permit their segregation at cell division. It also contributes to the segregational stability of plasmids. In the complex XerD specifically exchanges the bottom DNA strands. In Proteus mirabilis, this protein is Tyrosine recombinase XerD.